Consider the following 400-residue polypeptide: Nicotinate phosphoribosyltransferase (400 aa).

His220 carries the post-translational modification Phosphohistidine; by autocatalysis.

The protein belongs to the NAPRTase family. Transiently phosphorylated on a His residue during the reaction cycle. Phosphorylation strongly increases the affinity for substrates and increases the rate of nicotinate D-ribonucleotide production. Dephosphorylation regenerates the low-affinity form of the enzyme, leading to product release.

The enzyme catalyses nicotinate + 5-phospho-alpha-D-ribose 1-diphosphate + ATP + H2O = nicotinate beta-D-ribonucleotide + ADP + phosphate + diphosphate. It participates in cofactor biosynthesis; NAD(+) biosynthesis; nicotinate D-ribonucleotide from nicotinate: step 1/1. Catalyzes the synthesis of beta-nicotinate D-ribonucleotide from nicotinate and 5-phospho-D-ribose 1-phosphate at the expense of ATP. This chain is Nicotinate phosphoribosyltransferase, found in Escherichia coli O7:K1 (strain IAI39 / ExPEC).